Consider the following 297-residue polypeptide: Probable transcription factor vicR (297 aa).

Disordered stretches follow at residues 45 to 80 (LPGL…HSET) and 100 to 134 (TNQA…KNVH). A compositionally biased stretch (basic and acidic residues) spans 58 to 67 (QKEEMRRKNA). Residues 69–80 (AQMQNDSNHSET) show a composition bias toward polar residues. The span at 110–124 (RSREDITNSRAERHS) shows a compositional bias: basic and acidic residues.

Its subcellular location is the nucleus. Its function is as follows. Probable transcription factor; part of the gene cluster that mediates the biosynthesis of the secondary metabolite victorin, the molecular basis for Victoria blight of oats. May play a role in the regulation of the production of victorin. This Bipolaris victoriae (strain FI3) (Victoria blight of oats agent) protein is Probable transcription factor vicR.